A 361-amino-acid polypeptide reads, in one-letter code: Probable dual-specificity RNA methyltransferase RlmN (361 aa).

The active-site Proton acceptor is the Glu91. The Radical SAM core domain occupies 97–329 (QHYGLSVCVT…KKKGGNCVVR (233 aa)). The cysteines at positions 104 and 340 are disulfide-linked. Residues Cys111, Cys115, and Cys118 each contribute to the [4Fe-4S] cluster site. S-adenosyl-L-methionine contacts are provided by residues 163-164 (GE), Ser195, 218-220 (SLH), and Asn296. The active-site S-methylcysteine intermediate is the Cys340.

This sequence belongs to the radical SAM superfamily. RlmN family. [4Fe-4S] cluster serves as cofactor.

The protein localises to the cytoplasm. The enzyme catalyses adenosine(2503) in 23S rRNA + 2 reduced [2Fe-2S]-[ferredoxin] + 2 S-adenosyl-L-methionine = 2-methyladenosine(2503) in 23S rRNA + 5'-deoxyadenosine + L-methionine + 2 oxidized [2Fe-2S]-[ferredoxin] + S-adenosyl-L-homocysteine. The catalysed reaction is adenosine(37) in tRNA + 2 reduced [2Fe-2S]-[ferredoxin] + 2 S-adenosyl-L-methionine = 2-methyladenosine(37) in tRNA + 5'-deoxyadenosine + L-methionine + 2 oxidized [2Fe-2S]-[ferredoxin] + S-adenosyl-L-homocysteine. Functionally, specifically methylates position 2 of adenine 2503 in 23S rRNA and position 2 of adenine 37 in tRNAs. This is Probable dual-specificity RNA methyltransferase RlmN from Streptococcus pneumoniae (strain Hungary19A-6).